The chain runs to 505 residues: Metal transporter Nramp3.2 (505 aa).

A run of 12 helical transmembrane segments spans residues 50–70 (LWLF…PGNL), 78–98 (AIAG…GLLV), 127–147 (MVLW…EVIG), 159–179 (FVPL…FLFL), 187–207 (LEAV…WMFA), 233–253 (AVGV…SALV), 280–300 (ALVI…KGFY), 321–341 (YGGG…AAGQ), 369–389 (ALIT…VFDT), 400–420 (WLNV…LCLV), 439–459 (AWLV…DFFF), and 466–486 (AFTT…IYLI).

This sequence belongs to the NRAMP (TC 2.A.55) family. As to expression, expressed in roots, stems, buds and leaves.

The protein localises to the vacuole membrane. It carries out the reaction Mn(2+)(in) = Mn(2+)(out). The catalysed reaction is Fe(2+)(in) = Fe(2+)(out). Functionally, divalent metal transporter. Can transport manganese (Mn) and iron (Fe). Involved in the release of metals stored in the vacuole. This chain is Metal transporter Nramp3.2, found in Populus trichocarpa (Western balsam poplar).